Here is a 94-residue protein sequence, read N- to C-terminus: Neutrophil antibiotic peptide NP-2 (94 aa).

Positions 1 to 19 (MRTLTLLTALLLLALHTQA) are cleaved as a signal peptide. A propeptide spanning residues 20-62 (KSPQGTAEEAPDQEQLVMEDQDISISFGGDKGTALQDADVKAG) is cleaved from the precursor. 3 disulfides stabilise this stretch: C65–C93, C67–C82, and C72–C92.

The protein belongs to the alpha-defensin family. As to expression, highest expression in bone marrow and to a much lesser extent in small intestine.

The protein localises to the secreted. Functionally, active in vitro against S.aureus, fungi, Gram-positive and Gram-negative bacteria and to a lesser extent against an enveloped virus. This Rattus norvegicus (Rat) protein is Neutrophil antibiotic peptide NP-2 (Defa).